A 987-amino-acid polypeptide reads, in one-letter code: Mediator of RNA polymerase II transcription subunit 24 (987 aa).

6 short sequence motifs (LXXLL motif) span residues L128–L132, L344–L348, L446–L450, L555–L559, L786–L790, and L855–L859. S860 and S871 each carry phosphoserine.

This sequence belongs to the Mediator complex subunit 24 family. As to quaternary structure, component of the Mediator complex, which is composed of MED1, MED4, MED6, MED7, MED8, MED9, MED10, MED11, MED12, MED13, MED13L, MED14, MED15, MED16, MED17, MED18, MED19, MED20, MED21, MED22, MED23, MED24, MED25, MED26, MED27, MED29, MED30, MED31, CCNC, CDK8 and CDC2L6/CDK11. The MED12, MED13, CCNC and CDK8 subunits form a distinct module termed the CDK8 module. Mediator containing the CDK8 module is less active than Mediator lacking this module in supporting transcriptional activation. Individual preparations of the Mediator complex lacking one or more distinct subunits have been variously termed ARC, CRSP, DRIP, PC2, SMCC and TRAP. Interacts with AR.

It is found in the nucleus. In terms of biological role, component of the Mediator complex, a coactivator involved in the regulated transcription of nearly all RNA polymerase II-dependent genes. Mediator functions as a bridge to convey information from gene-specific regulatory proteins to the basal RNA polymerase II transcription machinery. Mediator is recruited to promoters by direct interactions with regulatory proteins and serves as a scaffold for the assembly of a functional preinitiation complex with RNA polymerase II and the general transcription factors. The chain is Mediator of RNA polymerase II transcription subunit 24 (Med24) from Rattus norvegicus (Rat).